Here is a 297-residue protein sequence, read N- to C-terminus: ER membrane protein complex subunit 2 (297 aa).

Ala-2 bears the N-acetylalanine mark. TPR repeat units lie at residues His-87–Asn-120, Gln-155–Asn-188, and Cys-192–Asn-225. Lys-255 is modified (N6-acetyllysine).

Belongs to the EMC2 family. Component of the ER membrane protein complex (EMC). Interacts with WNK1 (via amphipathic alpha-helix region); promoting the ER membrane protein complex assembly by preventing EMC2 ubiquitination. Ubiquitinated when soluble in the cytoplasm, leading to its degradation by the proteasome. Interaction with EMC2 prevents its ubiquitination and degradation.

The protein resides in the endoplasmic reticulum membrane. Its function is as follows. Part of the endoplasmic reticulum membrane protein complex (EMC) that enables the energy-independent insertion into endoplasmic reticulum membranes of newly synthesized membrane proteins. Preferentially accommodates proteins with transmembrane domains that are weakly hydrophobic or contain destabilizing features such as charged and aromatic residues. Involved in the cotranslational insertion of multi-pass membrane proteins in which stop-transfer membrane-anchor sequences become ER membrane spanning helices. It is also required for the post-translational insertion of tail-anchored/TA proteins in endoplasmic reticulum membranes. By mediating the proper cotranslational insertion of N-terminal transmembrane domains in an N-exo topology, with translocated N-terminus in the lumen of the ER, controls the topology of multi-pass membrane proteins like the G protein-coupled receptors. By regulating the insertion of various proteins in membranes, it is indirectly involved in many cellular processes. The protein is ER membrane protein complex subunit 2 of Homo sapiens (Human).